The primary structure comprises 221 residues: Translation initiation factor 6 (221 aa).

The protein belongs to the eIF-6 family.

Binds to the 50S ribosomal subunit and prevents its association with the 30S ribosomal subunit to form the 70S initiation complex. The polypeptide is Translation initiation factor 6 (Cenarchaeum symbiosum (strain A)).